Consider the following 606-residue polypeptide: EPM2A-interacting protein 1 (606 aa).

Serine 147 bears the Phosphoserine mark.

In terms of assembly, interacts with EPM2A.

It is found in the endoplasmic reticulum. The protein is EPM2A-interacting protein 1 (Epm2aip1) of Mus musculus (Mouse).